Reading from the N-terminus, the 539-residue chain is Phosphoenolpyruvate carboxykinase (ATP) (539 aa).

Substrate-binding residues include Arg-64, Tyr-206, and Lys-212. Residues Lys-212, His-231, and 247-255 (GLSGTGKTT) contribute to the ATP site. Residues Lys-212 and His-231 each coordinate Mn(2+). Asp-268 contacts Mn(2+). ATP-binding positions include Glu-296, Arg-332, 448–449 (RI), and Thr-454. Arg-332 is a substrate binding site.

It belongs to the phosphoenolpyruvate carboxykinase (ATP) family. As to quaternary structure, monomer. Mn(2+) serves as cofactor.

Its subcellular location is the cytoplasm. The enzyme catalyses oxaloacetate + ATP = phosphoenolpyruvate + ADP + CO2. The protein operates within carbohydrate biosynthesis; gluconeogenesis. In terms of biological role, involved in the gluconeogenesis. Catalyzes the conversion of oxaloacetate (OAA) to phosphoenolpyruvate (PEP) through direct phosphoryl transfer between the nucleoside triphosphate and OAA. The polypeptide is Phosphoenolpyruvate carboxykinase (ATP) (Yersinia enterocolitica serotype O:8 / biotype 1B (strain NCTC 13174 / 8081)).